A 572-amino-acid polypeptide reads, in one-letter code: Formate--tetrahydrofolate ligase (572 aa).

Position 81 to 88 (81 to 88) interacts with ATP; that stretch reads TPAGEGKT.

This sequence belongs to the formate--tetrahydrofolate ligase family.

It catalyses the reaction (6S)-5,6,7,8-tetrahydrofolate + formate + ATP = (6R)-10-formyltetrahydrofolate + ADP + phosphate. It participates in one-carbon metabolism; tetrahydrofolate interconversion. This chain is Formate--tetrahydrofolate ligase, found in Granulibacter bethesdensis (strain ATCC BAA-1260 / CGDNIH1).